Here is an 863-residue protein sequence, read N- to C-terminus: Chloride channel protein A (863 aa).

Topologically, residues 1-124 (MFRNNNNDNN…TSKLNHMLKT (124 aa)) are cytoplasmic. Residues 48–78 (ENGLINNNNNSHNNNNGGNNNNHGPSKVTHR) form a disordered region. A compositionally biased stretch (low complexity) spans 49-71 (NGLINNNNNSHNNNNGGNNNNHG). A run of 7 helical transmembrane segments spans residues 125 to 145 (FGKW…AYLV), 171 to 191 (IAFL…SLVI), 228 to 248 (LVSL…GPMI), 289 to 309 (GAAA…LFGF), 324 to 344 (TFFA…GFDM), 367 to 387 (LIPF…FVNL), and 408 to 428 (VLEV…CAAF). The segment at 434–460 (KTQANGSQTNSLDTSSSSILSSSGDNS) is disordered. A compositionally biased stretch (low complexity) spans 439–460 (GSQTNSLDTSSSSILSSSGDNS). 3 helical membrane-spanning segments follow: residues 518–538 (IFTI…TTIT), 539–559 (SGLM…ATFG), and 561–581 (LVGQ…ALVG). CBS domains follow at residues 661-742 (MKTE…CHEQ) and 816-863 (MNLS…KDLL).

The protein belongs to the chloride channel (TC 2.A.49) family.

The protein resides in the membrane. Its function is as follows. Voltage-gated chloride channel. Chloride channels may have several functions including the regulation of cell volume, membrane potential stabilization and signal transduction. The protein is Chloride channel protein A (clcA) of Dictyostelium discoideum (Social amoeba).